The following is a 148-amino-acid chain: UPF0756 membrane protein NMA2160 (148 aa).

A run of 4 helical transmembrane segments spans residues 13–35, 50–70, 80–100, and 121–141; these read LILL…LLLM, HGLN…LVSG, FLNF…WLAG, and VIGV…AGIL.

It belongs to the UPF0756 family.

It is found in the cell membrane. The protein is UPF0756 membrane protein NMA2160 of Neisseria meningitidis serogroup A / serotype 4A (strain DSM 15465 / Z2491).